The primary structure comprises 434 residues: Asparagine--tRNA ligase (434 aa).

It belongs to the class-II aminoacyl-tRNA synthetase family. As to quaternary structure, homodimer.

The protein resides in the cytoplasm. It catalyses the reaction tRNA(Asn) + L-asparagine + ATP = L-asparaginyl-tRNA(Asn) + AMP + diphosphate + H(+). The sequence is that of Asparagine--tRNA ligase from Oenococcus oeni (strain ATCC BAA-331 / PSU-1).